A 315-amino-acid chain; its full sequence is Calumenin-A (315 aa).

Positions 1–19 (MEIRPLLMCFALCVVYATS) are cleaved as a signal peptide. EF-hand domains follow at residues 68-103 (ESKR…AQKK), 104-139 (YIYE…TYLD), 151-186 (HMMA…EEYD), 188-223 (MKDI…HEDE), 229-264 (WVAT…SDYD), and 265-300 (HAEA…FVGS). Aspartate 81, aspartate 83, aspartate 85, glutamate 92, aspartate 117, asparagine 119, aspartate 121, methionine 123, and glutamate 128 together coordinate Ca(2+). A glycan (N-linked (GlcNAc...) asparagine) is linked at asparagine 131. The Ca(2+) site is built by aspartate 164, asparagine 166, aspartate 168, glutamate 175, aspartate 201, asparagine 203, aspartate 205, glutamate 212, aspartate 242, asparagine 244, aspartate 246, lysine 248, glutamate 253, aspartate 278, asparagine 280, aspartate 282, lysine 284, and glutamate 289. The short motif at 312–315 (HDEF) is the Prevents secretion from ER element.

This sequence belongs to the CREC family. Interacts with ggcx.

Its subcellular location is the endoplasmic reticulum membrane. The protein resides in the golgi apparatus. It localises to the secreted. The protein localises to the melanosome. It is found in the sarcoplasmic reticulum lumen. Functionally, involved in regulation of vitamin K-dependent carboxylation of multiple N-terminal glutamate residues. Seems to inhibit gamma-carboxylase ggcx. Binds 7 calcium ions with a low affinity. This chain is Calumenin-A (calua), found in Salmo salar (Atlantic salmon).